Reading from the N-terminus, the 63-residue chain is Cecropin-B (63 aa).

Positions 1–22 are cleaved as a signal peptide; the sequence is MNFNKIFVFVALILAISLGNTE. Arginine 62 carries the arginine amide modification.

The protein belongs to the cecropin family.

Its subcellular location is the secreted. Its function is as follows. Cecropins have lytic and antibacterial activity against several Gram-positive and Gram-negative bacteria. The protein is Cecropin-B (CecB) of Drosophila simulans (Fruit fly).